The sequence spans 609 residues: Dihydroxy-acid dehydratase 1 (609 aa).

Aspartate 81 is a binding site for Mg(2+). A [2Fe-2S] cluster-binding site is contributed by cysteine 122. Residues aspartate 123 and lysine 124 each coordinate Mg(2+). Residue lysine 124 is modified to N6-carboxylysine. Cysteine 195 is a [2Fe-2S] cluster binding site. Glutamate 491 contacts Mg(2+). The active-site Proton acceptor is serine 517.

Belongs to the IlvD/Edd family. As to quaternary structure, homodimer. The cofactor is [2Fe-2S] cluster. Mg(2+) serves as cofactor.

It catalyses the reaction (2R)-2,3-dihydroxy-3-methylbutanoate = 3-methyl-2-oxobutanoate + H2O. The catalysed reaction is (2R,3R)-2,3-dihydroxy-3-methylpentanoate = (S)-3-methyl-2-oxopentanoate + H2O. The protein operates within amino-acid biosynthesis; L-isoleucine biosynthesis; L-isoleucine from 2-oxobutanoate: step 3/4. It participates in amino-acid biosynthesis; L-valine biosynthesis; L-valine from pyruvate: step 3/4. Functions in the biosynthesis of branched-chain amino acids. Catalyzes the dehydration of (2R,3R)-2,3-dihydroxy-3-methylpentanoate (2,3-dihydroxy-3-methylvalerate) into 2-oxo-3-methylpentanoate (2-oxo-3-methylvalerate) and of (2R)-2,3-dihydroxy-3-methylbutanoate (2,3-dihydroxyisovalerate) into 2-oxo-3-methylbutanoate (2-oxoisovalerate), the penultimate precursor to L-isoleucine and L-valine, respectively. The sequence is that of Dihydroxy-acid dehydratase 1 from Acinetobacter baylyi (strain ATCC 33305 / BD413 / ADP1).